The sequence spans 325 residues: Gibberellin 20-oxidase-like protein (325 aa).

Residues 152 to 266 form the Fe2OG dioxygenase domain; sequence CHGYFRINNY…RFSLAFFWCF (115 aa). Fe cation contacts are provided by H186, D188, and H244. 2-oxoglutarate is bound at residue R257.

Belongs to the iron/ascorbate-dependent oxidoreductase family. GA20OX subfamily. It depends on Fe(2+) as a cofactor. As to expression, highly expressed in elongation zone of lateral roots.

Functionally, negative regulator of root hair growth. The protein is Gibberellin 20-oxidase-like protein of Arabidopsis thaliana (Mouse-ear cress).